A 91-amino-acid polypeptide reads, in one-letter code: CRISPR-associated endoribonuclease Cas2 (91 aa).

A Mg(2+)-binding site is contributed by aspartate 14.

This sequence belongs to the CRISPR-associated endoribonuclease Cas2 protein family. As to quaternary structure, homodimer, forms a heterotetramer with a Cas1 homodimer. The cofactor is Mg(2+).

Its function is as follows. CRISPR (clustered regularly interspaced short palindromic repeat), is an adaptive immune system that provides protection against mobile genetic elements (viruses, transposable elements and conjugative plasmids). CRISPR clusters contain sequences complementary to antecedent mobile elements and target invading nucleic acids. CRISPR clusters are transcribed and processed into CRISPR RNA (crRNA). Functions as a ssRNA-specific endoribonuclease. Involved in the integration of spacer DNA into the CRISPR cassette. This chain is CRISPR-associated endoribonuclease Cas2, found in Nanoarchaeum equitans (strain Kin4-M).